Here is a 2237-residue protein sequence, read N- to C-terminus: Zinc finger protein 318 (2237 aa).

Composition is skewed to low complexity over residues 1–12 (MYRSGSRSSVSS) and 30–39 (GASSGPTRRP). The disordered stretch occupies residues 1 to 221 (MYRSGSRSSV…DMDRDDLTDD (221 aa)). Residues 1 to 1114 (MYRSGSRSSV…THMHNKKHTQ (1114 aa)) form an interaction with AR region. Phosphoserine is present on Ser-40. The segment covering 53–66 (PARRHRSPSGHRGR) has biased composition (basic residues). Phosphoserine is present on residues Ser-69, Ser-109, and Ser-111. Residues 140–156 (IRGESRADFARDGRGDH) show a composition bias toward basic and acidic residues. 2 positions are modified to phosphoserine: Ser-167 and Ser-205. Tyr-237 carries the phosphotyrosine modification. Phosphoserine occurs at positions 239 and 246. Positions 263–350 (LHRPEFSPQS…SPRFLDPEFR (88 aa)) are disordered. Basic and acidic residues-rich tracts occupy residues 274–290 (CHDE…DKLK) and 297–317 (RSEE…EKVH). The span at 321–332 (GDHSSFTSGTRN) shows a compositional bias: polar residues. A coiled-coil region spans residues 348–376 (EFRELDLARRKREEEEEQSRSLSQELVGV). Ser-497, Ser-502, Ser-531, and Ser-557 each carry phosphoserine. Disordered regions lie at residues 551–612 (QEKR…ESLE) and 645–732 (QERL…TKNS). A compositionally biased stretch (acidic residues) spans 560–576 (DIEDEEKFLYGDEEEDI). Residues Lys-577, Lys-583, Lys-596, and Lys-607 each participate in a glycyl lysine isopeptide (Lys-Gly) (interchain with G-Cter in SUMO2) cross-link. The segment covering 577–586 (KSESPLKSLE) has biased composition (basic and acidic residues). Over residues 592-602 (GTRQKANSLPS) the composition is skewed to polar residues. 2 stretches are compositionally biased toward basic and acidic residues: residues 658–677 (SADR…HFSA) and 692–706 (RSSD…ETHH). Thr-865 carries the post-translational modification Phosphothreonine. The stretch at 904–1003 (EKNRASQKQK…SELDKVAQIL (100 aa)) forms a coiled coil. Composition is skewed to basic and acidic residues over residues 945 to 964 (QQGE…KDPL), 1013 to 1037 (KSSN…EKEL), and 1047 to 1056 (KESKMNEKSC). Disordered stretches follow at residues 945-966 (QQGE…PLLM) and 1013-1072 (KSSN…TVKQ). A Phosphoserine modification is found at Ser-1032. A compositionally biased stretch (polar residues) spans 1058–1072 (KSPSSTESLQPTVKQ). A Phosphoserine modification is found at Ser-1059. 2 Matrin-type zinc fingers span residues 1085-1119 (AGSH…LDPY) and 1158-1180 (FYCQ…VKGH). Disordered stretches follow at residues 1245–1289 (VKED…KKEP), 1302–1342 (SWKK…VGKA), and 1366–1395 (TTST…VSKP). Composition is skewed to basic and acidic residues over residues 1280–1289 (QVKEEVKKEP), 1304–1313 (KKPEKEEEKG), and 1321–1341 (PKED…EVGK). Ser-1445 carries the phosphoserine modification. Disordered stretches follow at residues 1449–1497 (KVEL…LSAP), 1614–1651 (HETK…SMSS), 1727–1770 (TSGS…HCQT), and 1790–1867 (EVYQ…MTGH). A compositionally biased stretch (pro residues) spans 1469-1490 (LPPPPPPPPPPPPPPPPPPPQA). A compositionally biased stretch (polar residues) spans 1618-1639 (LSSSTLANGESSSLPRTESSDF). Residues 1640–1651 (SSTCTLNSSMSS) are compositionally biased toward low complexity. Positions 1734–1749 (DTHKDRPPEGKIRFDL) are enriched in basic and acidic residues. The segment covering 1757–1770 (TDSTSHLSDTHCQT) has biased composition (polar residues). The segment covering 1796 to 1814 (GCRESEMKRKTELKGKVAT) has biased composition (basic and acidic residues). A coiled-coil region spans residues 1798–1827 (RESEMKRKTELKGKVATEEEEEEEEEGANS). Positions 1815–1824 (EEEEEEEEEG) are enriched in acidic residues. Residues 1828-1840 (IEDSNSNHGNRNT) show a composition bias toward polar residues. 9 positions are modified to phosphoserine: Ser-1878, Ser-1908, Ser-1988, Ser-2044, Ser-2054, Ser-2140, Ser-2143, Ser-2194, and Ser-2206. The segment at 2039–2064 (EGAHSSSNSRNGRITSNSLETGHPVE) is disordered. The segment covering 2041-2058 (AHSSSNSRNGRITSNSLE) has biased composition (polar residues). The interval 2178 to 2237 (EDNDSALNLVKTPPSGSPSRDQVVGGNVSPREMPEQEAAVDVIPDHTRSNVYNSQDYLNG) is disordered. Positions 2226–2237 (SNVYNSQDYLNG) are enriched in polar residues.

Homodimer. Heterodimer of isoform 1 and isoform 2. Isoform 1 and isoform 2 interact with AR. In terms of tissue distribution, isoform 1 and isoform 2 are highly expressed in testis, moderately expressed in adrenal gland and uterus and faintly expressed in brain, kidney and liver. Isoform 1 is expressed more in adrenal gland, uterus and liver than isoform 2 is. Expression during testicular development of isoform 1 and isoform 2 is restricted to spermatocytes at the pachytene stage of meiotic prophase and to round and elongated spermatids.

It localises to the nucleus. In terms of biological role, acts as a transcriptional corepressor for AR-mediated transactivation function. May act as a transcriptional regulator during spermatogenesis and in particular, during meiotic division. Functionally, acts as a transcriptional coactivator for AR-mediated transactivation function. May act as a transcriptional regulator during spermatogenesis and in particular, during meiotic division. This is Zinc finger protein 318 (Znf318) from Mus musculus (Mouse).